A 382-amino-acid chain; its full sequence is Na(+)/H(+) antiporter NhaA 2 (382 aa).

11 helical membrane-spanning segments follow: residues Met-7 to Leu-27, Leu-58 to Leu-78, Ser-94 to Ile-114, Gly-124 to Gly-144, Leu-153 to Phe-173, Leu-178 to Tyr-198, Tyr-199 to Leu-219, Asn-255 to Ile-275, Ile-291 to Ile-311, Phe-327 to Leu-347, and Leu-361 to Val-381.

It belongs to the NhaA Na(+)/H(+) (TC 2.A.33) antiporter family.

The protein resides in the cell inner membrane. The enzyme catalyses Na(+)(in) + 2 H(+)(out) = Na(+)(out) + 2 H(+)(in). Na(+)/H(+) antiporter that extrudes sodium in exchange for external protons. This Campylobacter jejuni subsp. jejuni serotype O:6 (strain 81116 / NCTC 11828) protein is Na(+)/H(+) antiporter NhaA 2.